The sequence spans 155 residues: U4/U6.U5 small nuclear ribonucleoprotein 27 kDa protein (155 aa).

2 stretches are compositionally biased toward basic residues: residues 1–31 (MGRSRSRSPRRERRRSRSTSRERERRRRERS) and 39–59 (RRSRSRSPHRRRSRSPRRHRS). Residues 1–97 (MGRSRSRSPR…ITEEDLEGKT (97 aa)) are disordered. Residues S61 and S65 each carry the phosphoserine modification. The span at 66-97 (RLKERRDEEKKETKETKSKERQITEEDLEGKT) shows a compositional bias: basic and acidic residues. A phosphoserine mark is found at S111, S114, and S132.

It belongs to the SNUT3 family. Part of a tri-snRNP complex. Post-translationally, phosphorylated in vitro by snRNP-associated protein kinase.

It is found in the nucleus. Functionally, may play a role in mRNA splicing. The polypeptide is U4/U6.U5 small nuclear ribonucleoprotein 27 kDa protein (SNRNP27) (Homo sapiens (Human)).